We begin with the raw amino-acid sequence, 87 residues long: Homeotic protein ultrabithorax (87 aa).

Positions 22–27 (FYPWMA) match the Antp-type hexapeptide motif.

It belongs to the Antp homeobox family. As to expression, in the embryo, expression is seen in the epidermis, somatic and visceral mesoderm, and the peripheral and central nervous system.

Its subcellular location is the nucleus. Its function is as follows. Sequence-specific transcription factor which is part of a developmental regulatory system that provides cells with specific positional identities on the anterior-posterior axis. Binds the consensus region 5'-TTAAT[GT][GA]-3'. This homeotic protein controls development of the cells in the posterior thoracic and first abdominal segments. It activates the synthesis of the decapentaplegic (DPP) growth factor. The chain is Homeotic protein ultrabithorax (Ubx) from Drosophila hydei (Fruit fly).